A 420-amino-acid polypeptide reads, in one-letter code: Gamma-glutamyl phosphate reductase (420 aa).

It belongs to the gamma-glutamyl phosphate reductase family.

The protein resides in the cytoplasm. The catalysed reaction is L-glutamate 5-semialdehyde + phosphate + NADP(+) = L-glutamyl 5-phosphate + NADPH + H(+). The protein operates within amino-acid biosynthesis; L-proline biosynthesis; L-glutamate 5-semialdehyde from L-glutamate: step 2/2. Functionally, catalyzes the NADPH-dependent reduction of L-glutamate 5-phosphate into L-glutamate 5-semialdehyde and phosphate. The product spontaneously undergoes cyclization to form 1-pyrroline-5-carboxylate. The protein is Gamma-glutamyl phosphate reductase of Streptococcus pneumoniae (strain 70585).